Here is a 523-residue protein sequence, read N- to C-terminus: NAD(P)H-quinone oxidoreductase subunit 2 (523 aa).

The next 13 helical transmembrane spans lie at 29–49 (AVLP…VDLA), 57–77 (WVPP…ALQW), 94–114 (LAVA…LISW), 132–152 (LAAT…SIFI), 182–202 (LLVG…LYGL), 221–241 (PIAA…IAAV), 255–275 (PTPV…ALAL), 291–311 (LLFT…ALAQ), 317–337 (MLAY…VCGT), 345–365 (VLYM…IILF), 389–409 (LGLS…GFFG), 424–444 (LLVV…ISVI), and 477–497 (VALI…NPLF).

Belongs to the complex I subunit 2 family. NDH-1 can be composed of about 15 different subunits; different subcomplexes with different compositions have been identified which probably have different functions.

The protein localises to the cellular thylakoid membrane. The catalysed reaction is a plastoquinone + NADH + (n+1) H(+)(in) = a plastoquinol + NAD(+) + n H(+)(out). It catalyses the reaction a plastoquinone + NADPH + (n+1) H(+)(in) = a plastoquinol + NADP(+) + n H(+)(out). In terms of biological role, NDH-1 shuttles electrons from an unknown electron donor, via FMN and iron-sulfur (Fe-S) centers, to quinones in the respiratory and/or the photosynthetic chain. The immediate electron acceptor for the enzyme in this species is believed to be plastoquinone. Couples the redox reaction to proton translocation, and thus conserves the redox energy in a proton gradient. Cyanobacterial NDH-1 also plays a role in inorganic carbon-concentration. In Synechococcus sp. (strain CC9902), this protein is NAD(P)H-quinone oxidoreductase subunit 2.